A 304-amino-acid polypeptide reads, in one-letter code: Protein BOBBER 1 (304 aa).

Ala2 is subject to N-acetylalanine. The stretch at 54–106 forms a coiled coil; that stretch reads EDEIVVAVRAAKEKLKKAEKKKAEKESVKPVEKKAEKEIVKLVEKKVEKESVK. The disordered stretch occupies residues 111–141; the sequence is ASSAEPIEVEKPKEEEEKKESGPIVPNKGNG. Basic and acidic residues predominate over residues 118–131; that stretch reads EVEKPKEEEEKKES. Residues 142–231 form the CS domain; the sequence is TDLENYSWIQ…DQMEWWKCCV (90 aa).

As to expression, expressed in all seedling tissues with highest expression levels at the root tip.

Its subcellular location is the cytoplasm. It is found in the cytoplasmic granule. In terms of biological role, small heat shock protein required for the establishment of auxin gradients and for patterning of the apical domain of the embryo. Involved in the specification of the cotyledon primordia. Also required for normal inflorescence and floral meristem function, normal developmental patterning and thermotolerance. Acts as a molecular chaperone. This Arabidopsis thaliana (Mouse-ear cress) protein is Protein BOBBER 1 (BOB1).